The following is a 263-amino-acid chain: Isoprenyl transferase (263 aa).

The active site involves D38. D38 contacts Mg(2+). Substrate is bound by residues 39–42 (GNRR), H55, and 83–85 (STD). The active-site Proton acceptor is the N86. Substrate-binding positions include F87, R89, R212, and 218 to 220 (RLS). E231 serves as a coordination point for Mg(2+).

This sequence belongs to the UPP synthase family. Homodimer. The cofactor is Mg(2+).

Functionally, catalyzes the condensation of isopentenyl diphosphate (IPP) with allylic pyrophosphates generating different type of terpenoids. This chain is Isoprenyl transferase, found in Thermus thermophilus (strain ATCC 27634 / DSM 579 / HB8).